We begin with the raw amino-acid sequence, 1235 residues long: Insulin receptor substrate 1 (1235 aa).

The residue at position 3 (S3) is a Phosphoserine. The segment at 3 to 133 is mediates interaction with PHIP; the sequence is SPPDTDGFSD…AGGGCGGSCS (131 aa). The PH domain occupies 12–115; that stretch reads DVRKVGYLRK…WYQALLQLHN (104 aa). A Phosphoserine; by CK2 modification is found at S99. In terms of domain architecture, IRS-type PTB spans 155–259; it reads FKEVWQVILK…EAMRAMSDEF (105 aa). A disordered region spans residues 258-425; that stretch reads EFRPRTKSQS…SDGGFISSDE (168 aa). S265 and S302 each carry phosphoserine; by RPS6KB1. Positions 265–276 are enriched in low complexity; sequence SQSSSSCSNPIS. At S307 the chain carries Phosphoserine; by IKKB, MAPK8 and RPS6KB1. Phosphoserine occurs at positions 318, 325, 340, and 343. Basic residues predominate over residues 349-358; it reads THAHRHRGSS. Low complexity-rich tracts occupy residues 378–399 and 407–419; these read SPSA…GSTS and SSAS…SDGG. S414 carries the phosphoserine modification. Phosphothreonine occurs at positions 441 and 448. Position 460 is a phosphotyrosine; by INSR (Y460). The short motif at 460–463 is the YXXM motif 1 element; that stretch reads YICM. T502 carries the post-translational modification Phosphothreonine; by CK2. The tract at residues 520–539 is disordered; sequence THSAGTSPTISHQKTPSQSS. Position 522 is a phosphoserine; by RPS6KB1 (S522). Residues 522 to 539 are compositionally biased toward polar residues; that stretch reads SAGTSPTISHQKTPSQSS. 2 short sequence motifs (YXXM motif) span residues 546–549 and 608–611; these read YTEM and YMPM. A Phosphotyrosine; by INSR modification is found at Y608. A Phosphoserine modification is found at S612. Y628 bears the Phosphotyrosine; by INSR mark. The short motif at 628–631 is the YXXM motif 4 element; sequence YMPM. S632 is subject to Phosphoserine; by RPS6KB1 and ROCK2. Y658 is subject to Phosphotyrosine. Positions 658 to 661 match the YXXM motif 5 motif; it reads YMMM. The segment covering 669 to 689 has biased composition (low complexity); it reads PDIGGGSCSSSSISAAPSGSS. A disordered region spans residues 669 to 720; sequence PDIGGGSCSSSSISAAPSGSSYGKPWTNGVGGHHTHALPHAKPPVESGGGKL. The short motif at 727-730 is the YXXM motif 6 element; that stretch reads YMNM. A disordered region spans residues 766-921; sequence FKHTQRPGEP…ATSRSSPSVR (156 aa). The span at 771-780 shows a compositional bias: basic and acidic residues; sequence RPGEPEEGAR. Composition is skewed to low complexity over residues 785-794, 801-810, and 872-881; these read RLSSSSGRLR, DSSSSTSSDS, and QQQQQQQQQQ. Phosphoserine; by AMPK and SIK2 is present on S789. S891 bears the Phosphoserine mark. A phosphotyrosine; by INSR mark is found at Y895, Y939, and Y987. The GRB2-binding stretch occupies residues 895 to 897; sequence YVN. Short sequence motifs (YXXM motif) lie at residues 939 to 942, 987 to 990, and 1010 to 1013; these read YMNM, YMTM, and YADM. A disordered region spans residues 1024–1165; it reads LPRTTGAAPP…SAPGCGAAGG (142 aa). Residues 1025-1046 show a composition bias toward low complexity; sequence PRTTGAAPPPSSTASASASVTP. The segment covering 1072–1084 has biased composition (polar residues); sequence TRVNLSPNHNQSA. Residue S1099 is modified to Phosphoserine. S1100 carries the post-translational modification Phosphoserine; by RPS6KB1. Over residues 1101–1114 the composition is skewed to polar residues; sequence ETFSAPTRAANTVS. Positions 1118-1128 are enriched in gly residues; it reads GAAGGGSGGGS. The residue at position 1172 (Y1172) is a Phosphotyrosine; by INSR. Residues 1177–1235 are disordered; it reads LVKDVKQHPQDCPSQQQSLPPPPPHQPLGSNEGSSPRRSSEDLSTYASINFQKQPEDRQ. K1179 participates in a covalent cross-link: Glycyl lysine isopeptide (Lys-Gly) (interchain with G-Cter in ubiquitin). The segment covering 1204–1229 has biased composition (polar residues); the sequence is LGSNEGSSPRRSSEDLSTYASINFQK. Phosphotyrosine; by INSR is present on Y1222.

As to quaternary structure, interacts with SOCS7. Interacts (via IRS-type PTB domain) with IGF1R and INSR (via the tyrosine-phosphorylated NPXY motif). Interacts with UBTF, FER and PIK3CA. Interacts (via phosphorylated YXXM motifs) with PIK3R1. Interacts with ROCK1. Interacts (via PH domain) with PHIP. Interacts with GRB2. Interacts with ALK. Interacts with EIF2AK2/PKR. Interacts with GKAP1. Interacts with DGKZ in the absence of insulin; insulin stimulation decreases this interaction. Found in a ternary complex with DGKZ and PIP5K1A in the absence of insulin stimulation. Interacts with SQSTM1; the interaction is disrupted by the presence of tensin TNS2. Interacts with NCK1 (via SH2 domain). Interacts with NCK2 (via SH3 domain). Interacts with SH2B1; this interaction enhances leptin-induced activation of the PI3-kinase pathway. Interacts with DVL2; this interaction promotes the Wnt/beta-catenin signaling pathway. Interacts with JAK1. In terms of processing, serine phosphorylation of IRS1 is a mechanism for insulin resistance. Ser-307 phosphorylation inhibits insulin action through disruption of IRS1 interaction with the insulin receptor, and Ser-789 phosphorylation is increased in the liver of insulin-resistant rats. Phosphorylation of Tyr-895 is required for GRB2-binding. Phosphorylated by ALK. Phosphorylated at Ser-265, Ser-302, Ser-632 and Ser-1100 by RPS6KB1; phosphorylation induces accelerated degradation of IRS1. Phosphorylated on tyrosine residues in response to insulin. In skeletal muscles, dephosphorylated on Tyr-608 by TNS2 under anabolic conditions; dephosphorylation results in the proteasomal degradation of IRS1. Post-translationally, ubiquitinated by the Cul7-RING(FBXW8) complex in a mTOR-dependent manner, leading to its degradation: the Cul7-RING(FBXW8) complex recognizes and binds IRS1 previously phosphorylated by S6 kinase (RPS6KB1 or RPS6KB2). Ubiquitinated by TRAF4 through 'Lys-29' linkage; this ubiquitination regulates the interaction of IRS1 with IGFR and IRS1 tyrosine phosphorylation upon IGF1 stimulation. S-nitrosylation at by BLVRB inhibits its activity.

The protein localises to the cytoplasm. It localises to the nucleus. Its function is as follows. Signaling adapter protein that participates in the signal transduction from two prominent receptor tyrosine kinases, insulin receptor/INSR and insulin-like growth factor I receptor/IGF1R. Plays therefore an important role in development, growth, glucose homeostasis as well as lipid metabolism. Upon phosphorylation by the insulin receptor, functions as a signaling scaffold that propagates insulin action through binding to SH2 domain-containing proteins including the p85 regulatory subunit of PI3K, NCK1, NCK2, GRB2 or SHP2. Recruitment of GRB2 leads to the activation of the guanine nucleotide exchange factor SOS1 which in turn triggers the Ras/Raf/MEK/MAPK signaling cascade. Activation of the PI3K/AKT pathway is responsible for most of insulin metabolic effects in the cell, and the Ras/Raf/MEK/MAPK is involved in the regulation of gene expression and in cooperation with the PI3K pathway regulates cell growth and differentiation. Acts a positive regulator of the Wnt/beta-catenin signaling pathway through suppression of DVL2 autophagy-mediated degradation leading to cell proliferation. This Rattus norvegicus (Rat) protein is Insulin receptor substrate 1 (Irs1).